A 122-amino-acid polypeptide reads, in one-letter code: Large ribosomal subunit protein uL14 (122 aa).

The protein belongs to the universal ribosomal protein uL14 family. In terms of assembly, part of the 50S ribosomal subunit. Forms a cluster with proteins L3 and L19. In the 70S ribosome, L14 and L19 interact and together make contacts with the 16S rRNA in bridges B5 and B8.

In terms of biological role, binds to 23S rRNA. Forms part of two intersubunit bridges in the 70S ribosome. This is Large ribosomal subunit protein uL14 from Cellvibrio japonicus (strain Ueda107) (Pseudomonas fluorescens subsp. cellulosa).